A 661-amino-acid chain; its full sequence is tRNA uridine 5-carboxymethylaminomethyl modification enzyme MnmG (661 aa).

An FAD-binding site is contributed by 13 to 18; sequence GGGHAG. Residue 285-299 coordinates NAD(+); it reads GPRYCPSVEDKINRF.

Belongs to the MnmG family. In terms of assembly, homodimer. Heterotetramer of two MnmE and two MnmG subunits. It depends on FAD as a cofactor.

The protein resides in the cytoplasm. Its function is as follows. NAD-binding protein involved in the addition of a carboxymethylaminomethyl (cmnm) group at the wobble position (U34) of certain tRNAs, forming tRNA-cmnm(5)s(2)U34. The sequence is that of tRNA uridine 5-carboxymethylaminomethyl modification enzyme MnmG from Acidovorax sp. (strain JS42).